The following is a 287-amino-acid chain: MMKNILAIQSHVVYGHAGNSAAEFPMRRLGANVWPLNTVQFSNHTQYGKWTGCVMPPSHLTEIVQGIAAIDKLHTCDAVLSGYLGSAEQGEHILGIVRQVKAANPQAKYFCDPVMGHPEKGCIVAPGVAEFHVRHGLPASDIIAPNLVELEILCEHPVNNVEEAVLAARELIAQGPQIVLVKHLARAGYSRDRFEMLLVTADEAWHISRPLVDFGMRQPVGVGDVTSGLLLVKLLQGATLQEALEHVTAAVYEIMVTTKAMQEYELQVVAAQDRIANPEHYFSATKL.

Residues serine 10 and 45 to 46 contribute to the substrate site; that span reads TQ. Residues aspartate 112, alanine 144, glutamate 149, lysine 182, and 209-212 contribute to the ATP site; that span reads RPLV. Position 224 (aspartate 224) interacts with substrate.

It belongs to the pyridoxine kinase family. PdxY subfamily. Homodimer. Mg(2+) serves as cofactor.

It carries out the reaction pyridoxal + ATP = pyridoxal 5'-phosphate + ADP + H(+). It functions in the pathway cofactor metabolism; pyridoxal 5'-phosphate salvage; pyridoxal 5'-phosphate from pyridoxal: step 1/1. In terms of biological role, pyridoxal kinase involved in the salvage pathway of pyridoxal 5'-phosphate (PLP). Catalyzes the phosphorylation of pyridoxal to PLP. The polypeptide is Pyridoxal kinase PdxY (Escherichia coli (strain UTI89 / UPEC)).